A 142-amino-acid chain; its full sequence is Group IIE secretory phospholipase A2 (142 aa).

The first 19 residues, 1–19 (MKPPIALACLCLLVPLAGG), serve as a signal peptide directing secretion. Aspartate 41, glycine 43, tyrosine 45, glycine 47, and glycine 49 together coordinate Ca(2+). 7 cysteine pairs are disulfide-bonded: cysteine 44/cysteine 135, cysteine 46/cysteine 62, cysteine 61/cysteine 115, cysteine 67/cysteine 142, cysteine 68/cysteine 108, cysteine 77/cysteine 101, and cysteine 95/cysteine 106. Histidine 65 is a catalytic residue. Aspartate 66 is a binding site for Ca(2+). Aspartate 109 is an active-site residue. Ca(2+) is bound by residues tyrosine 130 and asparagine 132.

The protein belongs to the phospholipase A2 family. Ca(2+) serves as cofactor. As to expression, highly expressed in skin and uterus, and at lower levels in various other tissues. Expressed in hair follicles, specifically localized in companion cells of the outer root sheath and cuticular cells of the inner root sheath in hair follicles during anagen. Expressed in white and brown adipose tissue.

The protein resides in the secreted. Its subcellular location is the cytoplasm. The enzyme catalyses a 1,2-diacyl-sn-glycero-3-phosphoethanolamine + H2O = a 1-acyl-sn-glycero-3-phosphoethanolamine + a fatty acid + H(+). It carries out the reaction 1-hexadecanoyl-2-(9Z-octadecenoyl)-sn-glycero-3-phosphoethanolamine + H2O = 1-hexadecanoyl-sn-glycero-3-phosphoethanolamine + (9Z)-octadecenoate + H(+). The catalysed reaction is 1-hexadecanoyl-2-(9Z,12Z-octadecadienoyl)-sn-glycero-3-phosphoethanolamine + H2O = 1-hexadecanoyl-sn-glycero-3-phosphoethanolamine + (9Z,12Z)-octadecadienoate + H(+). It catalyses the reaction 1-hexadecanoyl-2-(5Z,8Z,11Z,14Z-eicosatetraenoyl)-sn-glycero-3-phosphoethanolamine + H2O = 1-hexadecanoyl-sn-glycero-3-phosphoethanolamine + (5Z,8Z,11Z,14Z)-eicosatetraenoate + H(+). The enzyme catalyses 1,2-dihexadecanoyl-sn-glycero-3-phospho-(1'-sn-glycerol) + H2O = 1-hexadecanoyl-sn-glycero-3-phospho-(1'-sn-glycerol) + hexadecanoate + H(+). It carries out the reaction 1-hexadecanoyl-2-(9Z-octadecenoyl)-sn-glycero-3-phosphoglycerol + H2O = 1-hexadecanoyl-sn-glycero-3-phosphoglycerol + (9Z)-octadecenoate + H(+). The catalysed reaction is a 1,2-diacyl-sn-glycero-3-phosphocholine + H2O = a 1-acyl-sn-glycero-3-phosphocholine + a fatty acid + H(+). It catalyses the reaction 1,2-dihexadecanoyl-sn-glycero-3-phosphocholine + H2O = 1-hexadecanoyl-sn-glycero-3-phosphocholine + hexadecanoate + H(+). The enzyme catalyses 1-hexadecanoyl-2-(9Z-octadecenoyl)-sn-glycero-3-phosphocholine + H2O = 1-hexadecanoyl-sn-glycero-3-phosphocholine + (9Z)-octadecenoate + H(+). It carries out the reaction 1-hexadecanoyl-2-(9Z,12Z-octadecadienoyl)-sn-glycero-3-phosphocholine + H2O = (9Z,12Z)-octadecadienoate + 1-hexadecanoyl-sn-glycero-3-phosphocholine + H(+). The catalysed reaction is 1-hexadecanoyl-2-(4Z,7Z,10Z,13Z,16Z,19Z-docosahexaenoyl)-sn-glycero-3-phosphocholine + H2O = (4Z,7Z,10Z,13Z,16Z,19Z)-docosahexaenoate + 1-hexadecanoyl-sn-glycero-3-phosphocholine + H(+). In terms of biological role, secretory calcium-dependent phospholipase A2 that primarily targets extracellular phospholipids. Hydrolyzes the ester bond of the fatty acyl group attached at sn-2 position of phospholipids (phospholipase A2 activity), releasing various unsaturated fatty acids including oleoate, linoleoate, arachidonate, docosahexaenoate and lysophosphatidylethanolamines in preference to lysophosphatidylcholines. In response to high-fat diet, hydrolyzes minor lipoprotein phospholipids including phosphatidylserines, phosphatidylinositols and phosphatidylglycerols, altering lipoprotein composition and fat storage in adipose tissue and liver. May act in an autocrine and paracrine manner. Contributes to lipid remodeling of cellular membranes and generation of lipid mediators involved in pathogen clearance. Cleaves sn-2 fatty acyl chains of phosphatidylglycerols and phosphatidylethanolamines, which are major components of membrane phospholipids in bacteria. Acts as a hair follicle phospholipase A2. Selectively releases lysophosphatidylethanolamines (LPE) and various unsaturated fatty acids in skin to regulate hair follicle homeostasis. May regulate the inflammatory response by releasing arachidonate, a precursor of prostaglandins and leukotrienes. Upon allergen exposure, may participate in allergic inflammatory response by enhancing leukotriene C4 synthesis and degranulation in mast cells. The protein is Group IIE secretory phospholipase A2 (Pla2g2e) of Mus musculus (Mouse).